The primary structure comprises 633 residues: uncharacterized protein (633 aa).

The disordered stretch occupies residues 1 to 188; sequence MNNRGGFSHP…GQSSFYNSSY (188 aa). 2 stretches are compositionally biased toward low complexity: residues 32 to 80 and 104 to 148; these read GQPQ…GGNN and NNGN…TNSR. Residues 152 to 178 show a composition bias toward gly residues; the sequence is RGGSSRGGSSRGGNSGSSRGGSRGGYR. The stretch at 580-607 forms a coiled coil; it reads KSKNWTVDQASDELKKLSKNLRLLVSKH. The interval 611–633 is disordered; that stretch reads TKFQPPSADHTTQFEQDDEEEEN.

This is an uncharacterized protein from Dictyostelium discoideum (Social amoeba).